The following is a 273-amino-acid chain: Ribosomal RNA small subunit methyltransferase I (273 aa).

Belongs to the methyltransferase superfamily. RsmI family.

The protein localises to the cytoplasm. It carries out the reaction cytidine(1402) in 16S rRNA + S-adenosyl-L-methionine = 2'-O-methylcytidine(1402) in 16S rRNA + S-adenosyl-L-homocysteine + H(+). Its function is as follows. Catalyzes the 2'-O-methylation of the ribose of cytidine 1402 (C1402) in 16S rRNA. This chain is Ribosomal RNA small subunit methyltransferase I, found in Xylella fastidiosa (strain 9a5c).